We begin with the raw amino-acid sequence, 591 residues long: MAEINKQSNKWEQEEVSNENNWELAEEESVDWRGRPSNPNKHGGMRAALFVLGLQAFEIMGIAAVGNNLITYVINEMHFPLSKAANIVTNFVGTIFIFALLGGYLSDAFLGSFWTIIIFGFVELSGFILLSVQAHLPQLKPPKCNPLIDQTCEEAKGFKAMIFFMALYLVALGSGCVKPNMIAHGADQFSQSHPKQSKRLSSYFNAAYFAFSMGELIALTLLVWVQTHSGMDIGFGVSAAAMTMGIISLVSGTMYFRNKRPRRSIFTPIAHVIVAAILKRKLASPSDPRMLHGDHHVANDVVPSSTLPHTPRFRFLDKACIKIQDTNTKESPWRLCTVTQVEQVKTLISLVPIFASTIVFNTILAQLQTFSVQQGSSMNTRLSNSFHIPPASLQAIPYIMLIFLVPLYDSFLVPFARKLTGHNSGIPPLTRIGIGLFLSTFSMVSAAMLEKKRRDSSVLDGRILSIFWITPQFLIFGISEMFTAVGLIEFFYKQSAKGMESFLMALTYCSYSFGFYFSSVLVSVVNKITSTSVDSKGWLGENDLNKDRLDLFYWLLAVLSLLNFLSYLFWSRWNIKSSRRNNTNVVGDENI.

Over residues 1-10 (MAEINKQSNK) the composition is skewed to polar residues. The disordered stretch occupies residues 1-38 (MAEINKQSNKWEQEEVSNENNWELAEEESVDWRGRPSN). 12 consecutive transmembrane segments (helical) span residues 47-67 (AALF…AVGN), 85-105 (ANIV…GGYL), 109-129 (FLGS…GFIL), 157-177 (GFKA…SGCV), 204-224 (FNAA…LLVW), 233-253 (IGFG…VSGT), 347-367 (LISL…LAQL), 395-415 (AIPY…LVPF), 429-449 (LTRI…AAML), 463-483 (ILSI…EMFT), 502-522 (FLMA…SVLV), and 551-571 (LFYW…LFWS).

The protein belongs to the major facilitator superfamily. Proton-dependent oligopeptide transporter (POT/PTR) (TC 2.A.17) family. Expressed in flowers. Detected in roots and siliques.

It is found in the membrane. This is Protein NRT1/ PTR FAMILY 4.3 (NPF4.3) from Arabidopsis thaliana (Mouse-ear cress).